The sequence spans 237 residues: Fibroblast growth factor 3 (237 aa).

Positions 1-21 are cleaved as a signal peptide; it reads MVIIWILLLSFISCGPQVSWA. Asn-83 is a glycosylation site (N-linked (GlcNAc...) asparagine).

Belongs to the heparin-binding growth factors family.

Plays an important role in the regulation of embryonic development, cell proliferation, and cell differentiation. The chain is Fibroblast growth factor 3 (fgf3) from Xenopus laevis (African clawed frog).